We begin with the raw amino-acid sequence, 159 residues long: Ribosomal RNA large subunit methyltransferase H (159 aa).

Residues Leu-76, Gly-108, and Phe-127 to Phe-132 contribute to the S-adenosyl-L-methionine site.

It belongs to the RNA methyltransferase RlmH family. As to quaternary structure, homodimer.

The protein resides in the cytoplasm. The enzyme catalyses pseudouridine(1915) in 23S rRNA + S-adenosyl-L-methionine = N(3)-methylpseudouridine(1915) in 23S rRNA + S-adenosyl-L-homocysteine + H(+). Its function is as follows. Specifically methylates the pseudouridine at position 1915 (m3Psi1915) in 23S rRNA. This chain is Ribosomal RNA large subunit methyltransferase H, found in Bifidobacterium adolescentis (strain ATCC 15703 / DSM 20083 / NCTC 11814 / E194a).